Consider the following 410-residue polypeptide: Lissencephaly-1 homolog (410 aa).

The 33-residue stretch at 7-39 (QRDELNRAIADYLRSNGYEEAYSVFKKEAELDM) folds into the LisH domain. Positions 56-82 (TSVIRLQKKVMELESKLNEAKEEFTSG) form a coiled coil. WD repeat units follow at residues 106-147 (GHRS…RTLK), 148-187 (GHTD…CIRT), 190-229 (GHDH…CVKT), 232-271 (GHRE…CKAE), 274-333 (EHEH…CLMT), 336-377 (GHDN…KTLN), and 379-410 (HEHF…WECR).

Belongs to the WD repeat LIS1/nudF family. As to quaternary structure, can self-associate. Component of the cytosolic PAF-AH (I) heterotetrameric enzyme, which is composed of PAFAH1B1 (beta), PAFAH1B2 (alpha2) and PAFAH1B3 (alpha1) subunits. The catalytic activity of the enzyme resides in the alpha1 (PAFAH1B3) and alpha2 (PAFAH1B2) subunits, whereas the beta subunit (PAFAH1B1) has regulatory activity. Trimer formation is not essential for the catalytic activity. Interacts with dynein, dynactin, nde1 and ndel1.

The protein localises to the cytoplasm. Its subcellular location is the cytoskeleton. It is found in the microtubule organizing center. It localises to the centrosome. In terms of biological role, regulatory subunit (beta subunit) of the cytosolic type I platelet-activating factor (PAF) acetylhydrolase (PAF-AH (I)), an enzyme that catalyzes the hydrolyze of the acetyl group at the sn-2 position of PAF and its analogs and participates in the PAF inactivation. Positively regulates the activity of the minus-end directed microtubule motor protein dynein. May enhance dynein-mediated microtubule sliding by targeting dynein to the microtubule plus end. Required for several dynein- and microtubule-dependent processes such as the maintenance of Golgi integrity, the peripheral transport of microtubule fragments and the coupling of the nucleus and centrosome. May be required for proliferation of neuronal precursors and neuronal migration. The sequence is that of Lissencephaly-1 homolog (pafah1b1) from Xenopus tropicalis (Western clawed frog).